Reading from the N-terminus, the 211-residue chain is Protein-L-isoaspartate O-methyltransferase (211 aa).

Ser62 is an active-site residue.

It belongs to the methyltransferase superfamily. L-isoaspartyl/D-aspartyl protein methyltransferase family.

It is found in the cytoplasm. It carries out the reaction [protein]-L-isoaspartate + S-adenosyl-L-methionine = [protein]-L-isoaspartate alpha-methyl ester + S-adenosyl-L-homocysteine. Its function is as follows. Catalyzes the methyl esterification of L-isoaspartyl residues in peptides and proteins that result from spontaneous decomposition of normal L-aspartyl and L-asparaginyl residues. It plays a role in the repair and/or degradation of damaged proteins. The chain is Protein-L-isoaspartate O-methyltransferase from Shewanella putrefaciens (strain CN-32 / ATCC BAA-453).